The chain runs to 812 residues: Lon protease (812 aa).

The region spanning 22 to 215 (YAVLPLRDIV…KALSFMEAEI (194 aa)) is the Lon N-terminal domain. 367–374 (GPPGVGKT) is an ATP binding site. The 182-residue stretch at 602-783 (EDQVGVVTGL…GEVLKHALVR (182 aa)) folds into the Lon proteolytic domain. Active-site residues include S689 and K732. The disordered stretch occupies residues 787–812 (PIEWTEQENPTAVPPVEDEAGASLAH).

It belongs to the peptidase S16 family. Homohexamer. Organized in a ring with a central cavity.

The protein localises to the cytoplasm. It catalyses the reaction Hydrolysis of proteins in presence of ATP.. In terms of biological role, ATP-dependent serine protease that mediates the selective degradation of mutant and abnormal proteins as well as certain short-lived regulatory proteins. Required for cellular homeostasis and for survival from DNA damage and developmental changes induced by stress. Degrades polypeptides processively to yield small peptide fragments that are 5 to 10 amino acids long. Binds to DNA in a double-stranded, site-specific manner. This Brucella melitensis biotype 1 (strain ATCC 23456 / CCUG 17765 / NCTC 10094 / 16M) protein is Lon protease.